Consider the following 205-residue polypeptide: MKRLAVILITLALVSSMCITNSNEKRENMKNAKVLMVIAPKDFRDEELFEPMAVFESNGLKVDVVSTTKGECVGMLGNKITVEKTIYDVNPDDYVAIVIVGGIGSKEYLWNNTKLIELVKEFYNKNKVVSAICLSPVVLARAGILKGKKATVYPAPEAIEELKKAGAIYEDRGVVVDGNVITAKSPDYARLFGLEVLKAIEKNNE.

It belongs to the peptidase C56 family.

This is an uncharacterized protein from Methanocaldococcus jannaschii (strain ATCC 43067 / DSM 2661 / JAL-1 / JCM 10045 / NBRC 100440) (Methanococcus jannaschii).